We begin with the raw amino-acid sequence, 359 residues long: Insulin gene enhancer protein isl-2a (359 aa).

LIM zinc-binding domains lie at 27 to 80 (CVGC…CKRD) and 30 to 143 (CGSQ…RADH). A disordered region spans residues 171-190 (EPVPVRQPPHRNHVHKQSEK). Residues 191–250 (TTRVRTVLNEKQLHTLRTCYNANPRPDALMKEQLVEMTGLSPRVIRVWFQNKRCKDKKKS) constitute a DNA-binding region (homeobox). Low complexity predominate over residues 326 to 336 (ESGSLGNSSGS). A disordered region spans residues 326-359 (ESGSLGNSSGSDVTSLSSQLPDTPNSMVPSPVET). Over residues 337–359 (DVTSLSSQLPDTPNSMVPSPVET) the composition is skewed to polar residues.

The protein localises to the nucleus. Functionally, binds to one of the cis-acting domain of the insulin gene enhancer. May be involved in subtype specialization of primary motoneurons. The polypeptide is Insulin gene enhancer protein isl-2a (isl2a) (Danio rerio (Zebrafish)).